We begin with the raw amino-acid sequence, 177 residues long: Negative modulator of initiation of replication (177 aa).

The protein belongs to the SeqA family. As to quaternary structure, homodimer. Polymerizes to form helical filaments.

The protein resides in the cytoplasm. Its function is as follows. Negative regulator of replication initiation, which contributes to regulation of DNA replication and ensures that replication initiation occurs exactly once per chromosome per cell cycle. Binds to pairs of hemimethylated GATC sequences in the oriC region, thus preventing assembly of replication proteins and re-initiation at newly replicated origins. Repression is relieved when the region becomes fully methylated. The protein is Negative modulator of initiation of replication of Vibrio cholerae serotype O1 (strain ATCC 39315 / El Tor Inaba N16961).